Here is a 128-residue protein sequence, read N- to C-terminus: Orchestin (128 aa).

Positions 1–20 (MNKVFIIGVCLFIVSQAVLA) are cleaved as a signal peptide. Residues 23–95 (WDSDESSDER…DEDSDDSQES (73 aa)) form a disordered region. Basic and acidic residues-rich tracts occupy residues 30 to 49 (DERLSDRSDESREEPRKLVV) and 56 to 81 (EDSNESAEVRRRDDSRESEEEPRKLS). Acidic residues predominate over residues 84-93 (TSDEDSDDSQ).

Phosphorylated on Ser and Tyr residues. Calcium-binding activity is dependent on serine phosphorylation but not on tyrosine phosphorylation. Posterior caeca epithelium of the gut.

Its subcellular location is the secreted. In terms of biological role, plays a role in cuticle calcification. May induce precipitation of the calcium stored in the posterior caeca as calcium carbonate. This chain is Orchestin, found in Cryptorchestia cavimana (Amphipod).